The chain runs to 130 residues: Small ribosomal subunit protein uS8 (130 aa).

The protein belongs to the universal ribosomal protein uS8 family. Part of the 30S ribosomal subunit.

One of the primary rRNA binding proteins, it binds directly to 16S rRNA central domain where it helps coordinate assembly of the platform of the 30S subunit. This chain is Small ribosomal subunit protein uS8, found in Halobacterium salinarum (strain ATCC 29341 / DSM 671 / R1).